The sequence spans 694 residues: Methionine--tRNA ligase (694 aa).

Positions 12 to 22 match the 'HIGH' region motif; the sequence is PYANGPLHLGH. The Zn(2+) site is built by Cys-143, Cys-146, Cys-156, and Cys-159. The 'KMSKS' region signature appears at 330-334; the sequence is KMSKS. Lys-333 is a binding site for ATP. Low complexity predominate over residues 550–575; that stretch reads LAAPAAPATTSKAAPAKPDTKPAAAA. The segment at 550 to 580 is disordered; sequence LAAPAAPATTSKAAPAKPDTKPAAAANPQSP. The tRNA-binding domain maps to 591 to 694; that stretch reads DFAKLDLRIG…SGAQPGMPVR (104 aa).

Belongs to the class-I aminoacyl-tRNA synthetase family. MetG type 1 subfamily. Homodimer. Zn(2+) serves as cofactor.

Its subcellular location is the cytoplasm. It carries out the reaction tRNA(Met) + L-methionine + ATP = L-methionyl-tRNA(Met) + AMP + diphosphate. Is required not only for elongation of protein synthesis but also for the initiation of all mRNA translation through initiator tRNA(fMet) aminoacylation. The chain is Methionine--tRNA ligase from Xanthomonas oryzae pv. oryzae (strain MAFF 311018).